The following is a 171-amino-acid chain: Co-chaperone protein HscB homolog (171 aa).

Positions 2–69 constitute a J domain; that stretch reads NHFELFDLPV…DSRAAYLLSL (68 aa).

Belongs to the HscB family. In terms of assembly, interacts with HscA and stimulates its ATPase activity.

Its function is as follows. Co-chaperone involved in the maturation of iron-sulfur cluster-containing proteins. Seems to help targeting proteins to be folded toward HscA. The polypeptide is Co-chaperone protein HscB homolog (Acinetobacter baylyi (strain ATCC 33305 / BD413 / ADP1)).